Here is a 443-residue protein sequence, read N- to C-terminus: Putative type II methyltransferase M.BsuMIIP (443 aa).

Residues 4-440 (LRVMSLFSGI…QELIHTYVNK (437 aa)) form the SAM-dependent MTase C5-type domain. The active site involves cysteine 78.

Belongs to the class I-like SAM-binding methyltransferase superfamily. C5-methyltransferase family.

The enzyme catalyses a 2'-deoxycytidine in DNA + S-adenosyl-L-methionine = a 5-methyl-2'-deoxycytidine in DNA + S-adenosyl-L-homocysteine + H(+). A putative methylase, recognizes the double-stranded sequence 5'-GGCC-3', methylates C-?. There is no known cognate restriction enzyme. The sequence is that of Putative type II methyltransferase M.BsuMIIP (mtbP) from Bacillus subtilis (strain 168).